Consider the following 433-residue polypeptide: Agnestins efflux protein AgnL12 (433 aa).

2 stretches are compositionally biased toward polar residues: residues 1-10 and 25-40; these read MSRSTSTELQ and SIAS…PPST. The interval 1–40 is disordered; sequence MSRSTSTELQQELPASKEVPPDPTSIASSETASGSKPPST. The next 12 helical transmembrane spans lie at 47-67, 87-107, 116-136, 141-161, 174-194, 205-225, 248-268, 285-305, 309-329, 335-355, 370-390, and 401-421; these read ILVL…TNAF, ISWI…ISGY, LLIC…SLST, IFLT…LPAM, LAMG…PIAL, WTVR…CLAI, VMIF…SPFF, FYMV…PGLI, VGNY…ACCW, VGGI…VISL, GVAM…GTPI, and LGLS…ILLA.

It belongs to the major facilitator superfamily. Monocarboxylate porter (TC 2.A.1.13) family.

Its subcellular location is the cell membrane. Its function is as follows. Efflux pump that may be involved in the secretion of agnestins, dihydroxy-xanthone metabolites. This Paecilomyces divaricatus (Penicillium divaricatum) protein is Agnestins efflux protein AgnL12.